The sequence spans 96 residues: Aspartyl/glutamyl-tRNA(Asn/Gln) amidotransferase subunit C (96 aa).

This sequence belongs to the GatC family. Heterotrimer of A, B and C subunits.

It carries out the reaction L-glutamyl-tRNA(Gln) + L-glutamine + ATP + H2O = L-glutaminyl-tRNA(Gln) + L-glutamate + ADP + phosphate + H(+). The enzyme catalyses L-aspartyl-tRNA(Asn) + L-glutamine + ATP + H2O = L-asparaginyl-tRNA(Asn) + L-glutamate + ADP + phosphate + 2 H(+). Allows the formation of correctly charged Asn-tRNA(Asn) or Gln-tRNA(Gln) through the transamidation of misacylated Asp-tRNA(Asn) or Glu-tRNA(Gln) in organisms which lack either or both of asparaginyl-tRNA or glutaminyl-tRNA synthetases. The reaction takes place in the presence of glutamine and ATP through an activated phospho-Asp-tRNA(Asn) or phospho-Glu-tRNA(Gln). The sequence is that of Aspartyl/glutamyl-tRNA(Asn/Gln) amidotransferase subunit C from Bacillus anthracis (strain A0248).